We begin with the raw amino-acid sequence, 269 residues long: Shikimate dehydrogenase (NADP(+)) (269 aa).

Shikimate contacts are provided by residues 13 to 15 (SLS) and threonine 60. Lysine 64 (proton acceptor) is an active-site residue. Glutamate 76 provides a ligand contact to NADP(+). Positions 85 and 100 each coordinate shikimate. Residues 124–128 (GAGGA), 148–153 (NRTMSR), and isoleucine 209 contribute to the NADP(+) site. Tyrosine 211 is a shikimate binding site. Glycine 232 contacts NADP(+). Glutamine 239 serves as a coordination point for shikimate.

The protein belongs to the shikimate dehydrogenase family. Monomer or homodimer.

It catalyses the reaction shikimate + NADP(+) = 3-dehydroshikimate + NADPH + H(+). It participates in metabolic intermediate biosynthesis; chorismate biosynthesis; chorismate from D-erythrose 4-phosphate and phosphoenolpyruvate: step 4/7. Its function is as follows. Involved in the biosynthesis of the chorismate, which leads to the biosynthesis of aromatic amino acids. Catalyzes the reversible NADPH linked reduction of 3-dehydroshikimate (DHSA) to yield shikimate (SA). It can also use NAD to oxidize shikimate. The protein is Shikimate dehydrogenase (NADP(+)) of Staphylococcus epidermidis (strain ATCC 35984 / DSM 28319 / BCRC 17069 / CCUG 31568 / BM 3577 / RP62A).